Here is a 335-residue protein sequence, read N- to C-terminus: Biotin synthase (335 aa).

In terms of domain architecture, Radical SAM core spans 43–269 (YFGKKVKLNM…INPTKEIRIA (227 aa)). 3 residues coordinate [4Fe-4S] cluster: cysteine 61, cysteine 65, and cysteine 68. [2Fe-2S] cluster-binding residues include cysteine 104, cysteine 137, cysteine 197, and arginine 267.

It belongs to the radical SAM superfamily. Biotin synthase family. Homodimer. The cofactor is [4Fe-4S] cluster. Requires [2Fe-2S] cluster as cofactor.

It carries out the reaction (4R,5S)-dethiobiotin + (sulfur carrier)-SH + 2 reduced [2Fe-2S]-[ferredoxin] + 2 S-adenosyl-L-methionine = (sulfur carrier)-H + biotin + 2 5'-deoxyadenosine + 2 L-methionine + 2 oxidized [2Fe-2S]-[ferredoxin]. The protein operates within cofactor biosynthesis; biotin biosynthesis; biotin from 7,8-diaminononanoate: step 2/2. Its function is as follows. Catalyzes the conversion of dethiobiotin (DTB) to biotin by the insertion of a sulfur atom into dethiobiotin via a radical-based mechanism. This chain is Biotin synthase, found in Staphylococcus aureus (strain USA300).